Consider the following 292-residue polypeptide: NAD kinase (292 aa).

The active-site Proton acceptor is aspartate 73. NAD(+)-binding positions include 73-74, 147-148, histidine 158, arginine 175, aspartate 177, 188-193, and glutamine 247; these read DG, NE, and TAYSLS.

Belongs to the NAD kinase family. Requires a divalent metal cation as cofactor.

Its subcellular location is the cytoplasm. The catalysed reaction is NAD(+) + ATP = ADP + NADP(+) + H(+). In terms of biological role, involved in the regulation of the intracellular balance of NAD and NADP, and is a key enzyme in the biosynthesis of NADP. Catalyzes specifically the phosphorylation on 2'-hydroxyl of the adenosine moiety of NAD to yield NADP. The protein is NAD kinase of Klebsiella pneumoniae subsp. pneumoniae (strain ATCC 700721 / MGH 78578).